A 213-amino-acid chain; its full sequence is Methylthioribulose-1-phosphate dehydratase (213 aa).

Zn(2+)-binding residues include H104 and H106.

It belongs to the aldolase class II family. MtnB subfamily. The cofactor is Zn(2+).

It carries out the reaction 5-(methylsulfanyl)-D-ribulose 1-phosphate = 5-methylsulfanyl-2,3-dioxopentyl phosphate + H2O. It functions in the pathway amino-acid biosynthesis; L-methionine biosynthesis via salvage pathway; L-methionine from S-methyl-5-thio-alpha-D-ribose 1-phosphate: step 2/6. Functionally, catalyzes the dehydration of methylthioribulose-1-phosphate (MTRu-1-P) into 2,3-diketo-5-methylthiopentyl-1-phosphate (DK-MTP-1-P). The protein is Methylthioribulose-1-phosphate dehydratase of Stenotrophomonas maltophilia (strain K279a).